A 458-amino-acid polypeptide reads, in one-letter code: Probable asparagine--tRNA ligase, cytoplasmic (458 aa).

Belongs to the class-II aminoacyl-tRNA synthetase family.

It is found in the cytoplasm. It catalyses the reaction tRNA(Asn) + L-asparagine + ATP = L-asparaginyl-tRNA(Asn) + AMP + diphosphate + H(+). This is Probable asparagine--tRNA ligase, cytoplasmic from Enterocytozoon bieneusi (strain H348) (Microsporidian parasite).